A 142-amino-acid polypeptide reads, in one-letter code: Large ribosomal subunit protein uL13 (142 aa).

Belongs to the universal ribosomal protein uL13 family. As to quaternary structure, part of the 50S ribosomal subunit.

Functionally, this protein is one of the early assembly proteins of the 50S ribosomal subunit, although it is not seen to bind rRNA by itself. It is important during the early stages of 50S assembly. The sequence is that of Large ribosomal subunit protein uL13 from Yersinia pseudotuberculosis serotype O:1b (strain IP 31758).